The sequence spans 269 residues: Hydroxyethylthiazole kinase (269 aa).

Position 42 (methionine 42) interacts with substrate. 2 residues coordinate ATP: arginine 118 and serine 164. Glycine 191 provides a ligand contact to substrate.

This sequence belongs to the Thz kinase family. Mg(2+) serves as cofactor.

It catalyses the reaction 5-(2-hydroxyethyl)-4-methylthiazole + ATP = 4-methyl-5-(2-phosphooxyethyl)-thiazole + ADP + H(+). It functions in the pathway cofactor biosynthesis; thiamine diphosphate biosynthesis; 4-methyl-5-(2-phosphoethyl)-thiazole from 5-(2-hydroxyethyl)-4-methylthiazole: step 1/1. Its function is as follows. Catalyzes the phosphorylation of the hydroxyl group of 4-methyl-5-beta-hydroxyethylthiazole (THZ). This Listeria welshimeri serovar 6b (strain ATCC 35897 / DSM 20650 / CCUG 15529 / CIP 8149 / NCTC 11857 / SLCC 5334 / V8) protein is Hydroxyethylthiazole kinase.